Here is a 151-residue protein sequence, read N- to C-terminus: Ribonuclease H (151 aa).

An RNase H type-1 domain is found at 1 to 143 (MEEYVIYTDG…VDRVARKEAA (143 aa)). 4 residues coordinate Mg(2+): Asp-9, Glu-48, Asp-71, and Asp-135.

This sequence belongs to the RNase H family. Monomer. It depends on Mg(2+) as a cofactor.

It localises to the cytoplasm. The enzyme catalyses Endonucleolytic cleavage to 5'-phosphomonoester.. In terms of biological role, endonuclease that specifically degrades the RNA of RNA-DNA hybrids. This is Ribonuclease H from Neorickettsia sennetsu (strain ATCC VR-367 / Miyayama) (Ehrlichia sennetsu).